A 300-amino-acid polypeptide reads, in one-letter code: GTPase Era (300 aa).

Residues 8 to 176 (RCGYVAIVGR…EAQIAKHLPE (169 aa)) form the Era-type G domain. Residues 16-23 (GRPNVGKS) are G1. 16–23 (GRPNVGKS) lines the GTP pocket. The tract at residues 42–46 (QTTRH) is G2. Positions 63–66 (DTPG) are G3. GTP-binding positions include 63–67 (DTPGM) and 125–128 (NKTD). The interval 125-128 (NKTD) is G4. The segment at 155–157 (ISA) is G5. The 85-residue stretch at 199-283 (VREKIMRQLG…MLNLWVKVKG (85 aa)) folds into the KH type-2 domain.

The protein belongs to the TRAFAC class TrmE-Era-EngA-EngB-Septin-like GTPase superfamily. Era GTPase family. Monomer.

Its subcellular location is the cytoplasm. The protein resides in the cell inner membrane. In terms of biological role, an essential GTPase that binds both GDP and GTP, with rapid nucleotide exchange. Plays a role in 16S rRNA processing and 30S ribosomal subunit biogenesis and possibly also in cell cycle regulation and energy metabolism. This is GTPase Era from Pseudomonas entomophila (strain L48).